The primary structure comprises 127 residues: Multiple antibiotic resistance protein MarA (127 aa).

One can recognise an HTH araC/xylS-type domain in the interval 12-110 (HSILDWIEDN…DVPPHKYRMT (99 aa)). 2 DNA-binding regions (H-T-H motif) span residues 29–50 (EKVS…KKET) and 77–100 (ILYL…KNYF).

Monomer.

May be a transcriptional activator of genes involved in the multiple antibiotic resistance (Mar) phenotype. It can also activate genes such as sodA, zwf and micF. The polypeptide is Multiple antibiotic resistance protein MarA (marA) (Escherichia coli (strain K12)).